The chain runs to 149 residues: Deoxyuridine 5'-triphosphate nucleotidohydrolase (149 aa).

Substrate-binding positions include 65-67, N78, 82-84, and K92; these read RSG and TID.

It belongs to the dUTPase family. Requires Mg(2+) as cofactor.

It carries out the reaction dUTP + H2O = dUMP + diphosphate + H(+). Its pathway is pyrimidine metabolism; dUMP biosynthesis; dUMP from dCTP (dUTP route): step 2/2. In terms of biological role, this enzyme is involved in nucleotide metabolism: it produces dUMP, the immediate precursor of thymidine nucleotides and it decreases the intracellular concentration of dUTP so that uracil cannot be incorporated into DNA. The chain is Deoxyuridine 5'-triphosphate nucleotidohydrolase from Chlorobium chlorochromatii (strain CaD3).